A 380-amino-acid chain; its full sequence is Cytochrome b (380 aa).

4 consecutive transmembrane segments (helical) span residues 34–54, 78–99, 114–134, and 179–199; these read FGSL…LLAM, WLIR…YLHI, WNVG…GYVL, and FFAL…VHLT. Positions 84 and 98 each coordinate heme b. Heme b-binding residues include histidine 183 and histidine 197. Histidine 202 provides a ligand contact to a ubiquinone. The next 4 helical transmembrane spans lie at 227–247, 289–309, 321–341, and 348–368; these read IKDI…ALFS, LGGV…PLLH, LSQI…WIGS, and FIII…VLFP.

The protein belongs to the cytochrome b family. In terms of assembly, the cytochrome bc1 complex contains 11 subunits: 3 respiratory subunits (MT-CYB, CYC1 and UQCRFS1), 2 core proteins (UQCRC1 and UQCRC2) and 6 low-molecular weight proteins (UQCRH/QCR6, UQCRB/QCR7, UQCRQ/QCR8, UQCR10/QCR9, UQCR11/QCR10 and a cleavage product of UQCRFS1). This cytochrome bc1 complex then forms a dimer. Heme b serves as cofactor.

It localises to the mitochondrion inner membrane. In terms of biological role, component of the ubiquinol-cytochrome c reductase complex (complex III or cytochrome b-c1 complex) that is part of the mitochondrial respiratory chain. The b-c1 complex mediates electron transfer from ubiquinol to cytochrome c. Contributes to the generation of a proton gradient across the mitochondrial membrane that is then used for ATP synthesis. This is Cytochrome b (MT-CYB) from Vireo olivaceus (Red-eyed vireo).